The sequence spans 376 residues: Crh-like protein 4 (376 aa).

An N-terminal signal peptide occupies residues 1-21 (MFPKIFLTAATALLSAKSTFA). The region spanning 22-229 (QTYSSCNPLF…WARGPTDYSN (208 aa)) is the GH16 domain. A disulfide bridge links C27 with C35. E119 (nucleophile) is an active-site residue. E123 functions as the Proton donor in the catalytic mechanism. Residues E123, K202, W206, and T217 each coordinate chitin. S346 carries the GPI-anchor amidated serine lipid modification. A propeptide spans 347 to 376 (ASPINISRINPLLLCGPFTFFFFAAIRRWP) (removed in mature form). N351 carries an N-linked (GlcNAc...) asparagine glycan.

This sequence belongs to the glycosyl hydrolase 16 family. CRH1 subfamily.

The protein resides in the cell membrane. The catalysed reaction is Random endo-hydrolysis of N-acetyl-beta-D-glucosaminide (1-&gt;4)-beta-linkages in chitin and chitodextrins.. In terms of biological role, dual chitinase/transglycosylase that plays a role in cell wall architecture. Chitinase and transglycosylase activities are coupled. Required for the polysaccharide cross-linking at the septa and the cell wall. More specifically, transfers chitin to 1,6-beta-glucan in the cell wall. This Botryotinia fuckeliana (strain B05.10) (Noble rot fungus) protein is Crh-like protein 4.